The primary structure comprises 568 residues: Putative ABC transporter ATP-binding protein CPE1583 (568 aa).

2 ABC transporter domains span residues 7-248 (IEFK…GIRE) and 303-536 (LEFK…ASLK). ATP-binding positions include 41 to 48 (GPSGSGKS) and 336 to 343 (GKNGAGKS).

The protein belongs to the ABC transporter superfamily.

It is found in the cell membrane. Its function is as follows. Probably part of an ABC transporter complex. Responsible for energy coupling to the transport system. The protein is Putative ABC transporter ATP-binding protein CPE1583 of Clostridium perfringens (strain 13 / Type A).